A 531-amino-acid polypeptide reads, in one-letter code: Peptide chain release factor 3 (531 aa).

Residues 11 to 280 (GRRRTFAIIS…AFIRFASRPG (270 aa)) form the tr-type G domain. GTP contacts are provided by residues 20-27 (SHPDAGKT), 88-92 (DTPGH), and 142-145 (NKLD).

This sequence belongs to the TRAFAC class translation factor GTPase superfamily. Classic translation factor GTPase family. PrfC subfamily.

The protein resides in the cytoplasm. Its function is as follows. Increases the formation of ribosomal termination complexes and stimulates activities of RF-1 and RF-2. It binds guanine nucleotides and has strong preference for UGA stop codons. It may interact directly with the ribosome. The stimulation of RF-1 and RF-2 is significantly reduced by GTP and GDP, but not by GMP. This chain is Peptide chain release factor 3, found in Gloeobacter violaceus (strain ATCC 29082 / PCC 7421).